We begin with the raw amino-acid sequence, 506 residues long: UDP-N-acetylglucosamine--peptide N-acetylglucosaminyltransferase GtfA subunit (506 aa).

An N-terminus R-fold-1 region spans residues 1 to 78; that stretch reads MTVYNINLGI…FTDIKIAPTT (78 aa). 16–19 is a binding site for UDP; that stretch reads GVEY. The extended beta-sheet domain stretch occupies residues 79–195; sequence VTLDQVLAQV…LYRFPDRIFY (117 aa). The segment at 196 to 306 is C-terminus R-fold-1; that stretch reads SKAELVRYFL…QPQIATIPVG (111 aa). Histidine 242 contributes to the N-acetyl-D-glucosamine binding site. The tract at residues 307–506 is R-fold-2; the sequence is SLDQLTYPKE…LKEVRDDSAL (200 aa). UDP is bound by residues arginine 328, tyrosine 357, and 383–385; that span reads GHA. An N-acetyl-D-glucosamine-binding site is contributed by 405–407; it reads GFG. Position 409 (threonine 409) interacts with UDP.

It belongs to the glycosyltransferase group 1 family. Glycosyltransferase 4 subfamily. As to quaternary structure, forms a heterotetramer with 2 subunits each of GtfA and GtfB. Part of the accessory SecA2/SecY2 protein translocation apparatus required to export cell wall protein GspB.

It localises to the cytoplasm. The protein resides in the cell membrane. The catalysed reaction is L-seryl-[protein] + UDP-N-acetyl-alpha-D-glucosamine = 3-O-[N-acetyl-alpha-D-glucosaminyl]-L-seryl-[protein] + UDP + H(+). It functions in the pathway protein modification; protein glycosylation. Its function is as follows. Required for polymorphic O-glycosylation of GspB, a serine-rich repeat cell wall protein encoded upstream in the same operon. Catalyzes the first step in glycosylation by transferring N-acetylglucosamine from UDP-GlcNAc to serine residues in GspB. Part of the accessory SecA2/SecY2 system specifically required to export GspB. Upon coexpression in E.coli with GtfB glycosylates GspB constructs. Glycosylation probably occurs intracellularly. Requires GtfB for glycosylation activity, it has no activity alone. Does not use UDP-glucose as substrate. Has a fast, probably processive glycosylation phase followed by a slower, non-processive phase. The enzyme probably modifies its tertiary conformation by opening and closing its intersubunit interfaces to accomodate the increasingly glycosylated substrate; protein substrate recognition is provided by GtfB. The protein is UDP-N-acetylglucosamine--peptide N-acetylglucosaminyltransferase GtfA subunit of Streptococcus gordonii.